Reading from the N-terminus, the 633-residue chain is Opioid growth factor receptor (633 aa).

N-acetylmethionine is present on M1. The segment covering 1 to 38 (MDDPECDSTWEDESEEDGEDGQADDTTDEDTGDDDGDA) has biased composition (acidic residues). The tract at residues 1–44 (MDDPECDSTWEDESEEDGEDGQADDTTDEDTGDDDGDAEEARPS) is disordered. The Bipartite nuclear localization signal motif lies at 257-286 (RRELVHFAWEHFKPRREFVWGPRDKLRRFR). The interval 287–390 (PQTISRPLMG…EPDPQGVSEV (104 aa)) is disordered. Phosphoserine occurs at positions 327, 340, 361, 365, 403, and 452. Basic and acidic residues predominate over residues 351–374 (GDQRHEAKSPSPKESKKRKLEGNR). Positions 404 to 633 (PTSQEPREAE…IEASVEPPKP (230 aa)) are disordered. The span at 441-455 (ASNTQVQASALSPTP) shows a compositional bias: polar residues. Repeat copies occupy residues 467–475 (GPEDPKSQV), 476–484 (GPEDPKSQV), 485–493 (GPEDPKSQV), 494–502 (GPEDPKSQV), 503–511 (GPEDPKGQV), 512–520 (EPEDPKGQV), 521–529 (GPEDPKGQV), 530–538 (GPEDPKGQV), 539–547 (GPEDPKSQV), 548–556 (GPEDPKSQV), 557–565 (EPEDPKSQV), 566–574 (EPEDPKSQV), 575–583 (EPEDPKSQV), and 584–592 (GPEDPQSQV). The 14 X approximate tandem repeats stretch occupies residues 467-592 (GPEDPKSQVG…VGPEDPQSQV (126 aa)). The segment covering 505–517 (EDPKGQVEPEDPK) has biased composition (basic and acidic residues). Over residues 550-580 (EDPKSQVEPEDPKSQVEPEDPKSQVEPEDPK) the composition is skewed to basic and acidic residues. A phosphoserine mark is found at S601 and S608.

This sequence belongs to the opioid growth factor receptor family. In terms of tissue distribution, expressed in all tissues examined, including brain, heart, lung, liver, kidney and skeletal muscle.

It is found in the cytoplasm. It localises to the nucleus. Receptor for opioid growth factor (OGF), also known as Met-enkephalin. Seems to be involved in growth regulation. The sequence is that of Opioid growth factor receptor (Ogfr) from Mus musculus (Mouse).